The following is a 266-amino-acid chain: Glucosamine-6-phosphate deaminase (266 aa).

The Proton acceptor; for enolization step role is filled by D72. D141 acts as the For ring-opening step in catalysis. H143 acts as the Proton acceptor; for ring-opening step in catalysis. E148 acts as the For ring-opening step in catalysis.

It belongs to the glucosamine/galactosamine-6-phosphate isomerase family. NagB subfamily. As to quaternary structure, homohexamer.

The catalysed reaction is alpha-D-glucosamine 6-phosphate + H2O = beta-D-fructose 6-phosphate + NH4(+). Its pathway is amino-sugar metabolism; N-acetylneuraminate degradation; D-fructose 6-phosphate from N-acetylneuraminate: step 5/5. Its activity is regulated as follows. Allosterically activated by N-acetylglucosamine 6-phosphate (GlcNAc6P). Functionally, catalyzes the reversible isomerization-deamination of glucosamine 6-phosphate (GlcN6P) to form fructose 6-phosphate (Fru6P) and ammonium ion. The chain is Glucosamine-6-phosphate deaminase from Yersinia pseudotuberculosis serotype O:1b (strain IP 31758).